The primary structure comprises 525 residues: Lymphocyte activation gene 3 protein (525 aa).

The N-terminal stretch at 1 to 22 (MWEAQFLGLLFLQPLWVAPVKP) is a signal peptide. The Extracellular portion of the chain corresponds to 23–450 (LQPGAEVPVV…APGALPAGHL (428 aa)). An Ig-like V-type domain is found at 37–167 (GAPAQLPCSP…LSCRLRLRLG (131 aa)). The interval 37–252 (GAPAQLPCSP…LTYRDGFNVS (216 aa)) is interaction with FGL1. Residues Cys-44 and Cys-160 are joined by a disulfide bond. Residues 62-97 (TWQHQPDSGPPAAAPGHPLAPGPHPAAPSSWGPRPR) are disordered. Over residues 69-87 (SGPPAAAPGHPLAPGPHPA) the composition is skewed to pro residues. Residues 168 to 252 (QASMTASPPG…LTYRDGFNVS (85 aa)) form the Ig-like C2-type 1 domain. Residue Asn-188 is glycosylated (N-linked (GlcNAc...) asparagine). A disulfide bridge connects residues Cys-189 and Cys-241. Asn-250 and Asn-256 each carry an N-linked (GlcNAc...) asparagine glycan. 2 consecutive Ig-like C2-type domains span residues 265-343 (PTPL…QQLN) and 348-419 (LAII…QGER). The cysteines at positions 282 and 333 are disulfide-linked. N-linked (GlcNAc...) asparagine glycosylation occurs at Asn-343. The cysteines at positions 369 and 412 are disulfide-linked. The segment at 429-450 (ELSSPGAQRSGRAPGALPAGHL) is connecting peptide. The chain crosses the membrane as a helical span at residues 451–471 (LLFLILGVLSLLLLVTGAFGF). Residues 472–525 (HLWRRQWRPRRFSALEQGIHPPQAQSKIEELEQEPEPEPEPEPEPEPEPEPEQL) lie on the Cytoplasmic side of the membrane. Residues 487-525 (EQGIHPPQAQSKIEELEQEPEPEPEPEPEPEPEPEPEQL) are disordered. A KIEELE motif motif is present at residues 498–503 (KIEELE). A 12 X 2 AA tandem repeats of E-X region spans residues 501–524 (ELEQEPEPEPEPEPEPEPEPEPEQ). Acidic residues predominate over residues 502-525 (LEQEPEPEPEPEPEPEPEPEPEQL).

Belongs to the LAG3 family. In terms of assembly, interacts with MHC class II (MHC-II); selectively recognizes stable complexes of peptide and MHC-II. Interacts with FGL1 (via the Fibrinogen C-terminal domain). In terms of processing, proteolytically cleaved by ADAM10 and ADAM17 within the connecting peptide region, leading to release of Secreted lymphocyte activation gene 3 protein (sLAG-3). ADAM10 mediates constitutive cleavage, but cleavage increases following T-cell activation, whereas shedding by ADAM17 is induced by TCR signaling in a PRKCQ-dependent manner. Primarily expressed in activated T-cells and a subset of natural killer (NK) cells.

Its subcellular location is the cell membrane. The protein localises to the secreted. Functionally, lymphocyte activation gene 3 protein: Inhibitory receptor on antigen activated T-cells. Delivers inhibitory signals upon binding to ligands, such as FGL1. FGL1 constitutes a major ligand of LAG3 and is responsible for LAG3 T-cell inhibitory function. Following TCR engagement, LAG3 associates with CD3-TCR in the immunological synapse and directly inhibits T-cell activation. May inhibit antigen-specific T-cell activation in synergy with PDCD1/PD-1, possibly by acting as a coreceptor for PDCD1/PD-1. Negatively regulates the proliferation, activation, effector function and homeostasis of both CD8(+) and CD4(+) T-cells. Also mediates immune tolerance: constitutively expressed on a subset of regulatory T-cells (Tregs) and contributes to their suppressive function. Also acts as a negative regulator of plasmacytoid dendritic cell (pDCs) activation. Binds MHC class II (MHC-II); the precise role of MHC-II-binding is however unclear. May function as a ligand for MHC class II (MHC-II) on antigen-presenting cells (APC), promoting APC activation/maturation and driving Th1 immune response. The sequence is that of Lymphocyte activation gene 3 protein from Homo sapiens (Human).